We begin with the raw amino-acid sequence, 317 residues long: Tumor-associated calcium signal transducer 2 (317 aa).

Residues 1 to 24 (MARGLDLAPLLLLLLAMVAGFCTA) form the signal peptide. The Extracellular portion of the chain corresponds to 25–270 (QINCTCPTNK…QFSMKRLTTG (246 aa)). N27 carries an N-linked (GlcNAc...) asparagine glycan. Residues 64-139 (TSKCLLLKAR…TDKGDQSLRC (76 aa)) enclose the Thyroglobulin type-1 domain. Intrachain disulfides connect C67-C102, C113-C119, and C121-C139. N114 carries an N-linked (GlcNAc...) asparagine glycan. N162 and N202 each carry an N-linked (GlcNAc...) asparagine glycan. A helical transmembrane segment spans residues 271–291 (LIAVIAVVAVALVAGVVVLVV). At 292-317 (TNRRKSGKYKKVELKELGEMRSEPSL) the chain is on the cytoplasmic side.

The protein belongs to the EPCAM family.

The protein localises to the membrane. Functionally, may function as a growth factor receptor. This Rattus norvegicus (Rat) protein is Tumor-associated calcium signal transducer 2 (Tacstd2).